Consider the following 652-residue polypeptide: Zinc finger protein 432 (652 aa).

In terms of domain architecture, KRAB spans 8 to 79; that stretch reads LTLEDVTVEF…EDERHSRICP (72 aa). Tyrosine 41 is subject to 3'-nitrotyrosine. Residues serine 139 and serine 164 each carry the ADP-ribosylserine modification. C2H2-type zinc fingers lie at residues 205–227, 233–255, 261–283, 289–311, 317–339, 345–367, 373–395, 401–423, 429–451, 457–479, 485–507, 513–535, 541–563, 567–591, 597–619, and 625–647; these read HVCSECGKAFVKKSQLTDHERVH, YGCTLCAKVFSRKSRLNEHQRIH, FICSECGKVFTMKSRLIEHQRTH, YICNECGKGFPGKRNLIVHQRNH, YICSECGKGFTGKSMLIIHQRTH, YICSECGKGFTTKHYVIIHQRNH, YICNECGKGFTMKSRMIEHQRTH, YICSECGKGFPRKSNLIVHQRNH, YLCSECGKGFTVKSMLIIHQRTH, YTCSECGKGFPLKSRLIVHQRTH, YRCSECGKGFIVNSGLMLHQRTH, YICNECGKGFAFKSNLVVHQRTH, FMCSECGKGFTMKRYLIVHQQIH, KSCICSECGRGFAKETELALHKQVH, YGCNECGKGFTMKSRLIVHQRTH, and FVCSECRKAFSSKRNLIVHQRTH. Residue serine 246 is modified to ADP-ribosylserine. ADP-ribosylserine is present on serine 330. Position 414 is an ADP-ribosylserine (serine 414).

The protein belongs to the krueppel C2H2-type zinc-finger protein family. In terms of assembly, interacts with PARP1 and several chromatin remodeling proteins; the interaction with PARP1 reshapes ZNF432 interacting proteins. Interacts with TRIM28; the interaction is independent of PARP1.

It localises to the nucleus. In terms of biological role, homologous recombination repressor that functions as a poly(ADP-ribose) (PAR) reader regulating DNA damage response and PARP inhibition. Once recruited to DNA lesions via DNA-, in a PAR-dependent mechanism, stimulates PARP1 activity. Binds preferentially ssDNA and inhibits EXO1-mediated resection, probably through a PAR-independent DNA-binding mechanism. This chain is Zinc finger protein 432, found in Homo sapiens (Human).